We begin with the raw amino-acid sequence, 515 residues long: 1-pyrroline-5-carboxylate dehydrogenase 1 (515 aa).

Catalysis depends on residues E286 and C320.

The protein belongs to the aldehyde dehydrogenase family. RocA subfamily.

The catalysed reaction is L-glutamate 5-semialdehyde + NAD(+) + H2O = L-glutamate + NADH + 2 H(+). It participates in amino-acid degradation; L-proline degradation into L-glutamate; L-glutamate from L-proline: step 2/2. The sequence is that of 1-pyrroline-5-carboxylate dehydrogenase 1 (rocA1) from Halalkalibacterium halodurans (strain ATCC BAA-125 / DSM 18197 / FERM 7344 / JCM 9153 / C-125) (Bacillus halodurans).